The following is a 232-amino-acid chain: Phosphatidylserine decarboxylase proenzyme (232 aa).

The Schiff-base intermediate with substrate; via pyruvic acid role is filled by serine 190. Serine 190 carries the post-translational modification Pyruvic acid (Ser); by autocatalysis.

Belongs to the phosphatidylserine decarboxylase family. PSD-A subfamily. Heterodimer of a large membrane-associated beta subunit and a small pyruvoyl-containing alpha subunit. Requires pyruvate as cofactor. Is synthesized initially as an inactive proenzyme. Formation of the active enzyme involves a self-maturation process in which the active site pyruvoyl group is generated from an internal serine residue via an autocatalytic post-translational modification. Two non-identical subunits are generated from the proenzyme in this reaction, and the pyruvate is formed at the N-terminus of the alpha chain, which is derived from the carboxyl end of the proenzyme. The post-translation cleavage follows an unusual pathway, termed non-hydrolytic serinolysis, in which the side chain hydroxyl group of the serine supplies its oxygen atom to form the C-terminus of the beta chain, while the remainder of the serine residue undergoes an oxidative deamination to produce ammonia and the pyruvoyl prosthetic group on the alpha chain.

It is found in the cell membrane. It carries out the reaction a 1,2-diacyl-sn-glycero-3-phospho-L-serine + H(+) = a 1,2-diacyl-sn-glycero-3-phosphoethanolamine + CO2. It functions in the pathway phospholipid metabolism; phosphatidylethanolamine biosynthesis; phosphatidylethanolamine from CDP-diacylglycerol: step 2/2. Functionally, catalyzes the formation of phosphatidylethanolamine (PtdEtn) from phosphatidylserine (PtdSer). This chain is Phosphatidylserine decarboxylase proenzyme, found in Mesorhizobium japonicum (strain LMG 29417 / CECT 9101 / MAFF 303099) (Mesorhizobium loti (strain MAFF 303099)).